The sequence spans 440 residues: Xylose isomerase (440 aa).

Active-site residues include H101 and D104. Residues E232, E268, H271, D296, D307, D309, and D339 each contribute to the Mg(2+) site.

This sequence belongs to the xylose isomerase family. As to quaternary structure, homotetramer. Mg(2+) serves as cofactor.

The protein localises to the cytoplasm. It catalyses the reaction alpha-D-xylose = alpha-D-xylulofuranose. The chain is Xylose isomerase from Salmonella typhi.